The following is a 314-amino-acid chain: GDSL-like esterase Rv1075c (314 aa).

The signal sequence occupies residues 1–21; it reads MPRRSTIALATAGALASTGTA. The active-site Nucleophile is the S80. The Proton donor role is filled by D244. H247 acts as the Proton acceptor in catalysis. The segment at 276–314 is disordered; the sequence is IHETPSRPGTATLEPGHTRHSMMSRLRRPRPARAVPTGG. The segment covering 293–306 has biased composition (basic residues); that stretch reads TRHSMMSRLRRPRP.

It belongs to the 'GDSL' lipolytic enzyme family.

It carries out the reaction an acetyl ester + H2O = an aliphatic alcohol + acetate + H(+). The catalysed reaction is a butanoate ester + H2O = an aliphatic alcohol + butanoate + H(+). The enzyme catalyses triacetin + H2O = diacetylglycerol + acetate + H(+). It catalyses the reaction 1,2,3-tributanoylglycerol + H2O = dibutanoylglycerol + butanoate + H(+). With respect to regulation, esterase activity is significantly inhibited by the serine modifier phenylmethylsulfonyl fluoride (PMSF). Completely inhibited by diethyl pyrocarbonate. Esterase that preferentially hydrolyzes short-chain fatty acids, particularly pNP-acetate (C2) and pNP-butyrate (C4). Also has weak activity with pNP-hexanoate (C6) and pNP-octanoate (C8). It can also hydrolyze short-chain tryglycerides such as triacetin and tributyrin. Important for intracellular survival. The chain is GDSL-like esterase Rv1075c from Mycobacterium tuberculosis (strain ATCC 25618 / H37Rv).